The chain runs to 444 residues: Spermatogenesis-associated protein 1 (444 aa).

The segment covering 145–160 has biased composition (basic and acidic residues); that stretch reads GTIHRPDSLSLSKDEP. The interval 145-229 is disordered; that stretch reads GTIHRPDSLS…DEGEEDDKAT (85 aa). A coiled-coil region spans residues 268-403; that stretch reads SLLKIEREKI…RKLDTDKMKL (136 aa).

Interacts with IFT20.

The protein localises to the cytoplasmic vesicle. The protein resides in the secretory vesicle. It is found in the acrosome. The protein is Spermatogenesis-associated protein 1 (Spata1) of Rattus norvegicus (Rat).